A 528-amino-acid polypeptide reads, in one-letter code: Berberine bridge enzyme-like 17 (528 aa).

The first 19 residues, 1 to 19 (MKEVVYVLLLVLLVSVSDA), serve as a signal peptide directing secretion. Asparagine 20, asparagine 35, asparagine 52, and asparagine 72 each carry an N-linked (GlcNAc...) asparagine glycan. Residues cysteine 32 and cysteine 94 are joined by a disulfide bond. The region spanning 69-246 (LNPNDTKLIA…LSWKINLVDV (178 aa)) is the FAD-binding PCMH-type domain. Positions 109–171 (HDYEGLSFTS…KTLAFAGGVC (63 aa)) form a cross-link, 6-(S-cysteinyl)-8alpha-(pros-histidyl)-FAD (His-Cys). 3 N-linked (GlcNAc...) asparagine glycosylation sites follow: asparagine 256, asparagine 340, and asparagine 439.

Belongs to the oxygen-dependent FAD-linked oxidoreductase family. The cofactor is FAD. In terms of processing, the FAD cofactor is bound via a bicovalent 6-S-cysteinyl, 8alpha-N1-histidyl FAD linkage.

Its subcellular location is the secreted. It localises to the cell wall. The sequence is that of Berberine bridge enzyme-like 17 from Arabidopsis thaliana (Mouse-ear cress).